A 674-amino-acid chain; its full sequence is Endopolyphosphatase (674 aa).

Topologically, residues 1–21 are cytoplasmic; that stretch reads MVVVGKSEVRNVSMSRPKKKS. 2 consecutive propeptides (removed in mature form) follow at residues 1-83 and 385-674; these read MVVV…VIIK and EQST…YKDD. A Glycyl lysine isopeptide (Lys-Gly) (interchain with G-Cter in ubiquitin) cross-link involves residue lysine 6. The helical; Signal-anchor for type II membrane protein transmembrane segment at 22-42 threads the bilayer; that stretch reads LIAILSTCVLFFLVFIIGAKF. The Vacuolar portion of the chain corresponds to 43 to 674; it reads QYVSVFSKFL…SFASSGYKDD (632 aa). The N-linked (GlcNAc...) asparagine glycan is linked to asparagine 58. Residues 384–403 form a disordered region; the sequence is MEQSTRVQQGEDSNEEDEET. N-linked (GlcNAc...) asparagine glycosylation is found at asparagine 505 and asparagine 511.

Belongs to the endopolyphosphatase PPN1 family. Homotetramer. Interacts with PPN2. Mn(2+) serves as cofactor. Mg(2+) is required as a cofactor. The cofactor is Co(2+). Requires Zn(2+) as cofactor. Processing by proteases in the vacuole is required for activation. In terms of processing, ubiquitinated. Ubiquitination mediates sorting into internal vesicles in late endosomes. TUL1 and RSP5 are required for ubiquitination. Other cytoplasmic Lys residues than Lys-6 may also be ubiquitinated. Post-translationally, N-glycosylated. N-glycosylation is essential for the protease-mediated maturation.

Its subcellular location is the vacuole membrane. It is found in the cytoplasm. The enzyme catalyses [phosphate](n+1) + n H2O = (n+1) phosphate + n H(+). It catalyses the reaction [phosphate](n) + H2O = [phosphate](n-1) + phosphate + H(+). It carries out the reaction dATP + H2O = dADP + phosphate + H(+). With respect to regulation, inhibited by heparin and EDTA. Catalyzes the hydrolysis of inorganic polyphosphate (polyP) chains of many hundreds of phosphate residues into shorter lengths. Has both exopolyphosphatase and endopolyphosphatase activities at different ratios depending on divalent cations by cleaving phosphate from the chain end and by fragmenting long-chain polymers into shorter ones, respectively. The limited digestion products are 1 and 3 P(i) residues. Also releases phosphate from dATP. dATP phosphohydrolase activity is about 7-fold lower than the exopolyphosphatase activity. In Saccharomyces cerevisiae (strain ATCC 204508 / S288c) (Baker's yeast), this protein is Endopolyphosphatase.